Here is a 712-residue protein sequence, read N- to C-terminus: Copper amine oxidase 1 (712 aa).

319–330 (AFDLGEYGAGYL) lines the substrate pocket. D321 functions as the Proton acceptor in the catalytic mechanism. An intrachain disulfide couples C340 to C366. 404-409 (AANYEY) is a substrate binding site. Y407 acts as the Schiff-base intermediate with substrate; via topaquinone in catalysis. The residue at position 407 (Y407) is a 2',4',5'-topaquinone. H458 and H460 together coordinate Cu cation. Positions 616 and 617 each coordinate Mn(2+). H627 provides a ligand contact to Cu cation.

Belongs to the copper/topaquinone oxidase family. In terms of assembly, homodimer. The cofactor is Cu cation. Requires Zn(2+) as cofactor. L-topaquinone is required as a cofactor. It depends on Mn(2+) as a cofactor. Post-translationally, topaquinone (TPQ) is generated by copper-dependent autoxidation of a specific tyrosyl residue.

It localises to the cytoplasm. The catalysed reaction is a primary methyl amine + O2 + H2O = an aldehyde + H2O2 + NH4(+). Copper amine oxidase involved in the metabolism of xenobiotic and biogenic amines. Capable of catalyzing the oxidative deamination of primary amines such as ethylamine as alternate sources of nitrogen to support growth. This Schizosaccharomyces pombe (strain 972 / ATCC 24843) (Fission yeast) protein is Copper amine oxidase 1 (cao1).